A 362-amino-acid chain; its full sequence is sn-glycerol-3-phosphate import ATP-binding protein UgpC (362 aa).

The 232-residue stretch at 4-235 (LTLQSVKKTY…PATVFVASFI (232 aa)) folds into the ABC transporter domain. 37 to 44 (GPSGCGKS) contacts ATP.

This sequence belongs to the ABC transporter superfamily. sn-glycerol-3-phosphate importer (TC 3.A.1.1.3) family. As to quaternary structure, the complex is composed of two ATP-binding proteins (UgpC), two transmembrane proteins (UgpA and UgpE) and a solute-binding protein (UgpB).

The protein resides in the cell inner membrane. It carries out the reaction sn-glycerol 3-phosphate(out) + ATP + H2O = sn-glycerol 3-phosphate(in) + ADP + phosphate + H(+). In terms of biological role, part of the ABC transporter complex UgpBAEC involved in sn-glycerol-3-phosphate (G3P) import. Responsible for energy coupling to the transport system. This Paraburkholderia xenovorans (strain LB400) protein is sn-glycerol-3-phosphate import ATP-binding protein UgpC.